A 230-amino-acid polypeptide reads, in one-letter code: Uracil-DNA glycosylase (230 aa).

Catalysis depends on aspartate 72, which acts as the Proton acceptor.

The protein belongs to the uracil-DNA glycosylase (UDG) superfamily. UNG family.

Its subcellular location is the cytoplasm. The catalysed reaction is Hydrolyzes single-stranded DNA or mismatched double-stranded DNA and polynucleotides, releasing free uracil.. Functionally, excises uracil residues from the DNA which can arise as a result of misincorporation of dUMP residues by DNA polymerase or due to deamination of cytosine. This Wolinella succinogenes (strain ATCC 29543 / DSM 1740 / CCUG 13145 / JCM 31913 / LMG 7466 / NCTC 11488 / FDC 602W) (Vibrio succinogenes) protein is Uracil-DNA glycosylase.